Consider the following 326-residue polypeptide: Nitrogen metabolite regulation-like protein bik4 (326 aa).

NADP(+) contacts are provided by residues 13–18 (GATGEV) and 161–164 (FASN).

Belongs to the NmrA-type oxidoreductase family.

In terms of biological role, nitrogen metabolite regulation-like protein involved in the regulation of the gene cluster that mediates the biosynthesis of bikaverin, a red pigment also considered as a mycotoxin. In Gibberella fujikuroi (strain CBS 195.34 / IMI 58289 / NRRL A-6831) (Bakanae and foot rot disease fungus), this protein is Nitrogen metabolite regulation-like protein bik4.